We begin with the raw amino-acid sequence, 386 residues long: 2-deoxy-scyllo-inosose synthase (386 aa).

Residues Asp42, 73-76, 105-109, 129-130, 140-142, and 151-152 each bind NAD(+); these read EVHK, GITGN, TT, SLK, and KN. Residue Lys142 is part of the active site. Glu184 is a binding site for Co(2+). Residue Glu244 is part of the active site. Positions 247 and 263 each coordinate Co(2+).

The protein belongs to the sugar phosphate cyclases superfamily. DOI synthase family. NAD(+) is required as a cofactor. Co(2+) serves as cofactor.

The catalysed reaction is D-glucose 6-phosphate = 2-deoxy-L-scyllo-inosose + phosphate. The protein operates within metabolic intermediate biosynthesis; 2-deoxystreptamine biosynthesis; 2-deoxystreptamine from D-glucose 6-phosphate: step 1/4. It participates in antibiotic biosynthesis; paromomycin biosynthesis. Functionally, catalyzes the intramolecular carbocycle formation from D-glucose-6-phosphate to 2-deoxy-scyllo-inosose (DOI). The protein is 2-deoxy-scyllo-inosose synthase (parC) of Streptomyces paromomycinus (Streptomyces rimosus subsp. paromomycinus).